The following is a 189-amino-acid chain: Coatomer subunit zeta (189 aa).

It belongs to the adaptor complexes small subunit family. As to quaternary structure, oligomeric complex that consists of at least the alpha, beta, beta', gamma, delta, epsilon and zeta subunits.

The protein resides in the cytoplasm. Its subcellular location is the golgi apparatus membrane. The protein localises to the cytoplasmic vesicle. It is found in the COPI-coated vesicle membrane. The coatomer is a cytosolic protein complex that binds to dilysine motifs and reversibly associates with Golgi non-clathrin-coated vesicles, which further mediate biosynthetic protein transport from the ER, via the Golgi up to the trans Golgi network. Coatomer complex is required for budding from Golgi membranes, and is essential for the retrograde Golgi-to-ER transport of dilysine-tagged proteins. The zeta subunit may be involved in regulating the coat assembly and, hence, the rate of biosynthetic protein transport due to its association-dissociation properties with the coatomer complex. This chain is Coatomer subunit zeta (RET3), found in Saccharomyces cerevisiae (strain ATCC 204508 / S288c) (Baker's yeast).